The following is a 138-amino-acid chain: Large ribosomal subunit protein uL16c (138 aa).

This sequence belongs to the universal ribosomal protein uL16 family. In terms of assembly, part of the 50S ribosomal subunit.

It localises to the plastid. The protein resides in the chloroplast. The polypeptide is Large ribosomal subunit protein uL16c (Phaeodactylum tricornutum (strain CCAP 1055/1)).